The primary structure comprises 567 residues: MAQVQRMSRLMVKTLRDDPADAETLSHKLLVRAGYVRRNAAGIWSWLPLGKKVLDNISNVVREEMDAIGAQEVLLPALLPKEPYEASGRWEEYGDLLFRLKDRKGGDYLLGPTHEEIFTQTVKDQCTSYKDLPVMLYQIQTKYRDEARPRSGVLRGREFQMKDSYSFDTTDEGLAHSYALHRAAYIKIFERLGLDHRIVSAVSGAMGGSASEEFLAPAAAGEDTFADCPNCDYAANTEAVTFALAPVDGSAHGAVEELDTPDTPTIETLAAHLGVPASATLKNLLVKVDGEIVAVGVPGHREVDLGKLGEHLAPAVVELVTAEDFVGRDDLVRGYVGPQGLEKVRYLADPRVAPGTSWITGANKEGKHARNVVAGRDFEVDEYLDVVVVEEGDPCPKCGTGLVLDRAIEIGHIFQLGRKYADTFQLDVLGQQGKPVRVTMGSYGIGVSRAVAALTEQTADDKGLCWPREIAPADVHVVAAGKALQTELALDVSEKLNAAGLRVLVDDRPGVSPGVKFTDSELIGVPKILVAGRRSADGVLELKDRRTGEREELTVDEAIARLTADLA.

It belongs to the class-II aminoacyl-tRNA synthetase family. ProS type 1 subfamily. As to quaternary structure, homodimer.

The protein localises to the cytoplasm. It catalyses the reaction tRNA(Pro) + L-proline + ATP = L-prolyl-tRNA(Pro) + AMP + diphosphate. In terms of biological role, catalyzes the attachment of proline to tRNA(Pro) in a two-step reaction: proline is first activated by ATP to form Pro-AMP and then transferred to the acceptor end of tRNA(Pro). As ProRS can inadvertently accommodate and process non-cognate amino acids such as alanine and cysteine, to avoid such errors it has two additional distinct editing activities against alanine. One activity is designated as 'pretransfer' editing and involves the tRNA(Pro)-independent hydrolysis of activated Ala-AMP. The other activity is designated 'posttransfer' editing and involves deacylation of mischarged Ala-tRNA(Pro). The misacylated Cys-tRNA(Pro) is not edited by ProRS. This chain is Proline--tRNA ligase, found in Streptomyces griseus subsp. griseus (strain JCM 4626 / CBS 651.72 / NBRC 13350 / KCC S-0626 / ISP 5235).